A 303-amino-acid chain; its full sequence is Quinolinate synthase (303 aa).

H25 and S42 together coordinate iminosuccinate. Residue C87 participates in [4Fe-4S] cluster binding. Iminosuccinate-binding positions include 113–115 (YVN) and S130. C174 contacts [4Fe-4S] cluster. Iminosuccinate is bound by residues 200-202 (HPE) and T217. [4Fe-4S] cluster is bound at residue C260.

Belongs to the quinolinate synthase family. Type 2 subfamily. In terms of assembly, homodimer. It depends on [4Fe-4S] cluster as a cofactor.

It localises to the cytoplasm. The catalysed reaction is iminosuccinate + dihydroxyacetone phosphate = quinolinate + phosphate + 2 H2O + H(+). Its pathway is cofactor biosynthesis; NAD(+) biosynthesis; quinolinate from iminoaspartate: step 1/1. Catalyzes the condensation of iminoaspartate with dihydroxyacetone phosphate to form quinolinate. The polypeptide is Quinolinate synthase (Pyrococcus furiosus (strain ATCC 43587 / DSM 3638 / JCM 8422 / Vc1)).